The primary structure comprises 185 residues: Ribosome-recycling factor (185 aa).

The protein belongs to the RRF family.

The protein resides in the cytoplasm. In terms of biological role, responsible for the release of ribosomes from messenger RNA at the termination of protein biosynthesis. May increase the efficiency of translation by recycling ribosomes from one round of translation to another. This Aeromonas hydrophila subsp. hydrophila (strain ATCC 7966 / DSM 30187 / BCRC 13018 / CCUG 14551 / JCM 1027 / KCTC 2358 / NCIMB 9240 / NCTC 8049) protein is Ribosome-recycling factor.